Consider the following 136-residue polypeptide: ATP synthase epsilon chain (136 aa).

Belongs to the ATPase epsilon chain family. F-type ATPases have 2 components, CF(1) - the catalytic core - and CF(0) - the membrane proton channel. CF(1) has five subunits: alpha(3), beta(3), gamma(1), delta(1), epsilon(1). CF(0) has three main subunits: a, b and c.

It is found in the cell membrane. Functionally, produces ATP from ADP in the presence of a proton gradient across the membrane. The polypeptide is ATP synthase epsilon chain (Ureaplasma urealyticum serovar 10 (strain ATCC 33699 / Western)).